The primary structure comprises 435 residues: uncharacterized protein (435 aa).

4 residues coordinate S-adenosyl-L-methionine: Gln-261, Tyr-294, Glu-318, and Asp-366. Cys-393 (nucleophile) is an active-site residue.

This sequence belongs to the class I-like SAM-binding methyltransferase superfamily. RNA M5U methyltransferase family.

This is an uncharacterized protein from Bifidobacterium longum (strain NCC 2705).